The chain runs to 365 residues: MNENHYLLLTPGPLTTTKTVKEVMLYDWCTWDVEYNTMVQDVRNRLVSLATKEEEKYTTVLMQGSGTFSVEAVIGSVIPRKGKLLVCTNGAYGKRIVQMAEMLHIDVVVSQTEEWEPTNIAEVEQLLQQDKEITHIVVVHCETTTGIINPIVDVCKLGKKYGKVTLVDAMSSFGGIEIDIAELQIDFLISSANKCIQGVPGFGFVIANRDELLKCKGQARSLSLDLYDQWETMEEQNGKWRFTSPTHVVHAFYQALLELEEEGGVRARYNRYYSNQKLLVHKMKEMGFKPLVDEKYQSPIITSFIYPEAGFEFLQLYNELKRYGFVIYPGKISKVDTFRIGNIGDVHEDDINRLVDSIAKGVVIG.

Lys-194 is modified (N6-(pyridoxal phosphate)lysine).

This sequence belongs to the class-V pyridoxal-phosphate-dependent aminotransferase family. PhnW subfamily. In terms of assembly, homodimer. The cofactor is pyridoxal 5'-phosphate.

The enzyme catalyses (2-aminoethyl)phosphonate + pyruvate = phosphonoacetaldehyde + L-alanine. Functionally, involved in phosphonate degradation. The polypeptide is 2-aminoethylphosphonate--pyruvate transaminase (Bacillus mycoides (strain KBAB4) (Bacillus weihenstephanensis)).